We begin with the raw amino-acid sequence, 1302 residues long: Phosphoribosylformylglycinamidine synthase (1302 aa).

ATP-binding positions include 307-318 (GASTGSGGEIRD) and Ala-678. Positions 718, 722, and 891 each coordinate Mg(2+). Residues 1049 to 1302 (MAILREQGVN…MFQNARKNIG (254 aa)) form the Glutamine amidotransferase type-1 domain. Cys-1142 (nucleophile) is an active-site residue. Catalysis depends on residues His-1267 and Glu-1269.

The protein in the N-terminal section; belongs to the FGAMS family. As to quaternary structure, monomer.

It localises to the cytoplasm. The enzyme catalyses N(2)-formyl-N(1)-(5-phospho-beta-D-ribosyl)glycinamide + L-glutamine + ATP + H2O = 2-formamido-N(1)-(5-O-phospho-beta-D-ribosyl)acetamidine + L-glutamate + ADP + phosphate + H(+). It functions in the pathway purine metabolism; IMP biosynthesis via de novo pathway; 5-amino-1-(5-phospho-D-ribosyl)imidazole from N(2)-formyl-N(1)-(5-phospho-D-ribosyl)glycinamide: step 1/2. Phosphoribosylformylglycinamidine synthase involved in the purines biosynthetic pathway. Catalyzes the ATP-dependent conversion of formylglycinamide ribonucleotide (FGAR) and glutamine to yield formylglycinamidine ribonucleotide (FGAM) and glutamate. This is Phosphoribosylformylglycinamidine synthase from Vibrio parahaemolyticus serotype O3:K6 (strain RIMD 2210633).